Here is a 707-residue protein sequence, read N- to C-terminus: MSPAVDTASTAKDPISVMKSNASAAAADQIKTHEYEHLTSVPIVQPLPITDRLSSEAAQKYKPNLPGGFEEYKSLHKESLENPAKFYHERAQLLNWFKPYDQVFIPDTEGKPTFENNAWFTNGQLNACYNLVDRHAFTQPNKVAILYEADEPGQGYSLTYAELLEQVCKVAQILQYSMNVKKGDTVAVYMPMIPQALITLLAITRIGAIHSVVFAGFSSNSLRDRINDAYSKTVITTDESKRGGKTIETKRIVDEALKDTPQVTNVLVFKRTHNENIKYIPGRDLDWDEEVKKYKSYTPCEPVDSEHPLFLLYTSGSTGAPKGVQHSTAGYLLQALLSMKYTFDIQNDDIFFTAGDIGWITGHTYCVYGPLLQGCTTLVFEGTPAYPNFSRYWEIVDKYQVTQFYVAPTALRLLKRAGDSFTEGFSLKSLRSLGSVGEPIAAEVWEWYSEKIGKNELPIVDTYWQTESGSHLVTPLAGGATPMKPGAAAFPFFGIDLAVLDPTTGIEQTGEHAEGVLAIKRPWPSFARTIWKNNDRFLDTYLKPYPGYYFTGDGVARDKDGFFWILGRVDDVVNVSGHRLSTAEIEAAIIEDDMVAECAVVGFNDELTGQAVAAFVVLKNKSSLTAASESELQDIKKHLIITVRKDIGPFAAPKLIVLVDDLPKTRSGKIMRRILRKILAGESDQLGDVSTLSNPGIVKHLIDSVKL.

CoA contacts are provided by residues 242–245 (RGGK) and T361. ATP is bound by residues 437–439 (GEP), 461–466 (DTYWQT), D553, and R568. S576 contacts CoA. An ATP-binding site is contributed by R579. R644 provides a ligand contact to CoA. The short motif at 705–707 (VKL) is the Microbody targeting signal element.

This sequence belongs to the ATP-dependent AMP-binding enzyme family.

The protein resides in the microsome. Its subcellular location is the endoplasmic reticulum. The catalysed reaction is acetate + ATP + CoA = acetyl-CoA + AMP + diphosphate. Functionally, may be required for assimilation of ethanol and acetate. The sequence is that of Acetyl-coenzyme A synthetase 1 (ACS1) from Kluyveromyces lactis (strain ATCC 8585 / CBS 2359 / DSM 70799 / NBRC 1267 / NRRL Y-1140 / WM37) (Yeast).